The following is a 287-amino-acid chain: Pyridoxal kinase PdxY (287 aa).

Residues Ser-9 and 44–45 (MQ) each bind substrate. The ATP site is built by Asp-111, Ala-142, Glu-147, and Lys-180. Asp-221 lines the substrate pocket.

It belongs to the pyridoxine kinase family. PdxY subfamily. Homodimer. Mg(2+) is required as a cofactor.

The catalysed reaction is pyridoxal + ATP = pyridoxal 5'-phosphate + ADP + H(+). Its pathway is cofactor metabolism; pyridoxal 5'-phosphate salvage; pyridoxal 5'-phosphate from pyridoxal: step 1/1. Pyridoxal kinase involved in the salvage pathway of pyridoxal 5'-phosphate (PLP). Catalyzes the phosphorylation of pyridoxal to PLP. The polypeptide is Pyridoxal kinase PdxY (Burkholderia mallei (strain ATCC 23344)).